The primary structure comprises 1856 residues: Autophagy-related protein 2 (1856 aa).

7 disordered regions span residues Asn123 to Lys167, Leu229 to Ser283, Lys309 to Asp328, Thr395 to His428, Leu1157 to Met1177, Met1614 to Ala1647, and Lys1719 to Asp1741. Positions Ala137–Asp147 are enriched in acidic residues. Residues Lys250–Asp262 are compositionally biased toward polar residues. The segment covering Asn270–Gly280 has biased composition (acidic residues). The segment covering Asp412–Asp424 has biased composition (acidic residues). The span at Leu1157 to Ser1170 shows a compositional bias: low complexity. The span at Ser1621–Ser1639 shows a compositional bias: polar residues. The segment covering Thr1732–Asp1741 has biased composition (acidic residues).

This sequence belongs to the ATG2 family.

The protein resides in the preautophagosomal structure membrane. It localises to the endoplasmic reticulum membrane. It carries out the reaction a 1,2-diacyl-sn-glycero-3-phosphocholine(in) = a 1,2-diacyl-sn-glycero-3-phosphocholine(out). The catalysed reaction is a 1,2-diacyl-sn-glycero-3-phospho-L-serine(in) = a 1,2-diacyl-sn-glycero-3-phospho-L-serine(out). It catalyses the reaction a 1,2-diacyl-sn-glycero-3-phosphoethanolamine(in) = a 1,2-diacyl-sn-glycero-3-phosphoethanolamine(out). Lipid transfer protein required for autophagosome completion and peroxisome degradation. Tethers the edge of the isolation membrane (IM) to the endoplasmic reticulum (ER) and mediates direct lipid transfer from ER to IM for IM expansion. ATG2/SPO72 binds to the ER exit site (ERES), which is the membrane source for autophagosome formation, using basic residues in its N-terminal region (NR) and to the expanding edge of the IM through its C-terminal region. The latter binding is assisted by an ATG18-PtdIns3P interaction. ATG2/SPO72 then extracts phospholipids from the membrane source using its NR and transfers them to ATG9 to the IM through its predicted beta-sheet-rich structure for membrane expansion. The chain is Autophagy-related protein 2 (SPO72) from Candida albicans (strain SC5314 / ATCC MYA-2876) (Yeast).